An 83-amino-acid chain; its full sequence is Small ribosomal subunit protein bS18 (83 aa).

It belongs to the bacterial ribosomal protein bS18 family. Part of the 30S ribosomal subunit. Forms a tight heterodimer with protein bS6.

Its function is as follows. Binds as a heterodimer with protein bS6 to the central domain of the 16S rRNA, where it helps stabilize the platform of the 30S subunit. The sequence is that of Small ribosomal subunit protein bS18 from Desulfosudis oleivorans (strain DSM 6200 / JCM 39069 / Hxd3) (Desulfococcus oleovorans).